A 393-amino-acid polypeptide reads, in one-letter code: Protein TsgA (393 aa).

12 helical membrane-spanning segments follow: residues 11–31 (WISF…GMVM), 51–71 (FLNA…EIVP), 78–98 (FGFL…SLAL), 101–121 (TAMF…TFLI), 140–160 (FFSM…AHSI), 162–182 (WYWV…LTFG), 206–226 (IGVL…LGFI), 245–265 (TLVS…SFIL), 273–293 (ILTV…TGTP), 297–317 (AWSI…IITL), 332–352 (FVLT…GPIV), and 361–381 (LLTA…LGFV).

The protein belongs to the major facilitator superfamily. TsgA family.

It localises to the cell inner membrane. The sequence is that of Protein TsgA from Shigella boydii serotype 18 (strain CDC 3083-94 / BS512).